A 142-amino-acid chain; its full sequence is PDZ domain-containing protein 11 (142 aa).

Positions 49 to 131 (TIVLKKPPGA…ILMKVRYFPY (83 aa)) constitute a PDZ domain.

It localises to the cytoplasm. This Danio rerio (Zebrafish) protein is PDZ domain-containing protein 11 (pdzd11).